A 296-amino-acid polypeptide reads, in one-letter code: Porphobilinogen deaminase (296 aa).

Residue Cys235 is modified to S-(dipyrrolylmethanemethyl)cysteine.

The protein belongs to the HMBS family. As to quaternary structure, monomer. Dipyrromethane serves as cofactor.

The catalysed reaction is 4 porphobilinogen + H2O = hydroxymethylbilane + 4 NH4(+). Its pathway is porphyrin-containing compound metabolism; protoporphyrin-IX biosynthesis; coproporphyrinogen-III from 5-aminolevulinate: step 2/4. In terms of biological role, tetrapolymerization of the monopyrrole PBG into the hydroxymethylbilane pre-uroporphyrinogen in several discrete steps. This chain is Porphobilinogen deaminase, found in Alkaliphilus oremlandii (strain OhILAs) (Clostridium oremlandii (strain OhILAs)).